The primary structure comprises 92 residues: Long neurotoxin 73 (92 aa).

The signal sequence occupies residues 1-21; that stretch reads MKTLLLTLVVVTIVCLDLGDS. 5 cysteine pairs are disulfide-bonded: Cys24-Cys41, Cys34-Cys62, Cys47-Cys51, Cys66-Cys77, and Cys78-Cys83.

It belongs to the three-finger toxin family. Long-chain subfamily. Type II alpha-neurotoxin sub-subfamily. In terms of tissue distribution, expressed by the venom gland.

The protein localises to the secreted. Functionally, binds with high affinity to muscular (alpha-1/CHRNA1) and neuronal (alpha-7/CHRNA7) nicotinic acetylcholine receptor (nAChR) and inhibits acetylcholine from binding to the receptor, thereby impairing neuromuscular and neuronal transmission. The sequence is that of Long neurotoxin 73 from Drysdalia coronoides (White-lipped snake).